The chain runs to 441 residues: Ribosomal protein uS12 methylthiotransferase RimO (441 aa).

One can recognise an MTTase N-terminal domain in the interval 8–118; that stretch reads PKIGFVSLGC…VLQHVHHYVP (111 aa). [4Fe-4S] cluster contacts are provided by cysteine 17, cysteine 53, cysteine 82, cysteine 150, cysteine 154, and cysteine 157. In terms of domain architecture, Radical SAM core spans 136-373; it reads LTPRHYAYLK…MQLQQQISAE (238 aa). One can recognise a TRAM domain in the interval 376–441; the sequence is QEKVGREILV…DEYDLWGSRV (66 aa).

It belongs to the methylthiotransferase family. RimO subfamily. [4Fe-4S] cluster is required as a cofactor.

The protein localises to the cytoplasm. The catalysed reaction is L-aspartate(89)-[ribosomal protein uS12]-hydrogen + (sulfur carrier)-SH + AH2 + 2 S-adenosyl-L-methionine = 3-methylsulfanyl-L-aspartate(89)-[ribosomal protein uS12]-hydrogen + (sulfur carrier)-H + 5'-deoxyadenosine + L-methionine + A + S-adenosyl-L-homocysteine + 2 H(+). Functionally, catalyzes the methylthiolation of an aspartic acid residue of ribosomal protein uS12. The polypeptide is Ribosomal protein uS12 methylthiotransferase RimO (Salmonella paratyphi A (strain ATCC 9150 / SARB42)).